The primary structure comprises 202 residues: N-(5'-phosphoribosyl)anthranilate isomerase (202 aa).

Belongs to the TrpF family.

It carries out the reaction N-(5-phospho-beta-D-ribosyl)anthranilate = 1-(2-carboxyphenylamino)-1-deoxy-D-ribulose 5-phosphate. The protein operates within amino-acid biosynthesis; L-tryptophan biosynthesis; L-tryptophan from chorismate: step 3/5. This Listeria welshimeri serovar 6b (strain ATCC 35897 / DSM 20650 / CCUG 15529 / CIP 8149 / NCTC 11857 / SLCC 5334 / V8) protein is N-(5'-phosphoribosyl)anthranilate isomerase.